Consider the following 223-residue polypeptide: Type III pantothenate kinase (223 aa).

17 to 24 is a binding site for ATP; that stretch reads DIGNTRIH. Residues Tyr-81 and 85–88 contribute to the substrate site; that span reads GIDR. Asp-87 serves as the catalytic Proton acceptor. K(+) is bound at residue Asp-102. Ser-105 serves as a coordination point for ATP. Thr-157 lines the substrate pocket.

The protein belongs to the type III pantothenate kinase family. As to quaternary structure, homodimer. NH4(+) serves as cofactor. The cofactor is K(+).

It localises to the cytoplasm. It catalyses the reaction (R)-pantothenate + ATP = (R)-4'-phosphopantothenate + ADP + H(+). Its pathway is cofactor biosynthesis; coenzyme A biosynthesis; CoA from (R)-pantothenate: step 1/5. With respect to regulation, not regulated by feedback inhibition by CoA and its thioesters as described for many other pantothenate kinases. Not inhibited by N-pentylpantothenamide (N5-Pan), and this compound cannot act as a substrate either. Its function is as follows. Catalyzes the phosphorylation of pantothenate (Pan), the first step in CoA biosynthesis. Can also utilize CTP or GTP instead of ATP as a phosphoryl donor, albeit to a lesser extent. The polypeptide is Type III pantothenate kinase (coaX) (Helicobacter pylori (strain ATCC 700392 / 26695) (Campylobacter pylori)).